The following is a 103-amino-acid chain: Matrix Gla protein (103 aa).

Residues 1-19 (MKSLLLLSILAALAVAALC) form the signal peptide. E21 bears the 4-carboxyglutamate; partial mark. A phosphoserine mark is found at S22, S25, and S28. In terms of domain architecture, Gla spans 51–97 (RAKAQERIRELNKPQYELNREACDDFKLCERYAMVYGYNAAYDRYFR). A 4-carboxyglutamate mark is found at E56, E60, E67, and E71. An intrachain disulfide couples C73 to C79. A propeptide spans 99–102 (RRGA) (removed in short form; probably by carboxypeptidase N). Position 103 (K103) is a propeptide, removed in long form; probably by carboxypeptidase H.

It belongs to the osteocalcin/matrix Gla protein family. In terms of processing, requires vitamin K-dependent gamma-carboxylation for its function.

The protein localises to the secreted. In terms of biological role, associates with the organic matrix of bone and cartilage. Thought to act as an inhibitor of bone formation. The chain is Matrix Gla protein (MGP) from Bos taurus (Bovine).